Consider the following 301-residue polypeptide: Phosphate transport system permease protein PstA 2 (301 aa).

Helical transmembrane passes span 36–56, 83–103, 127–147, 149–169, 209–229, and 274–294; these read ACVC…IGVV, IIGT…VSVL, LSGI…VVYF, WGFS…PYIA, GIVT…APLL, and ALLL…INWL. The ABC transmembrane type-1 domain occupies 83–288; sequence IIGTAVLAIG…VFLLLLIFIG (206 aa).

This sequence belongs to the binding-protein-dependent transport system permease family. CysTW subfamily.

The protein localises to the cell membrane. Part of the binding-protein-dependent transport system for phosphate; probably responsible for the translocation of the substrate across the membrane. The polypeptide is Phosphate transport system permease protein PstA 2 (pstA2) (Mycobacterium bovis (strain ATCC BAA-935 / AF2122/97)).